The chain runs to 180 residues: Epididymal-specific lipocalin-6 (180 aa).

The signal sequence occupies residues 1-20; it reads MGGLLLAALLALVAVPRAQA. A disulfide bond links C81 and C174.

Belongs to the calycin superfamily. Lipocalin family.

The protein localises to the secreted. Functionally, may play a role in male fertility. The chain is Epididymal-specific lipocalin-6 (LCN6) from Macaca mulatta (Rhesus macaque).